We begin with the raw amino-acid sequence, 428 residues long: Gamma-glutamyl phosphate reductase (428 aa).

This sequence belongs to the gamma-glutamyl phosphate reductase family.

It localises to the cytoplasm. It catalyses the reaction L-glutamate 5-semialdehyde + phosphate + NADP(+) = L-glutamyl 5-phosphate + NADPH + H(+). It functions in the pathway amino-acid biosynthesis; L-proline biosynthesis; L-glutamate 5-semialdehyde from L-glutamate: step 2/2. Catalyzes the NADPH-dependent reduction of L-glutamate 5-phosphate into L-glutamate 5-semialdehyde and phosphate. The product spontaneously undergoes cyclization to form 1-pyrroline-5-carboxylate. The protein is Gamma-glutamyl phosphate reductase of Zymomonas mobilis subsp. mobilis (strain ATCC 31821 / ZM4 / CP4).